The chain runs to 319 residues: G-protein coupled receptor 171 (319 aa).

At 1 to 21 (MTNSSTFCPVYRDLEPFTYFF) the chain is on the extracellular side. Asparagine 3 carries an N-linked (GlcNAc...) asparagine glycan. A helical membrane pass occupies residues 22 to 42 (YLVFLIGIIGSCFATWAFIQK). The Cytoplasmic segment spans residues 43–48 (NTNHRC). Residues 49–69 (VSIYLINLLTADFLLTLALPV) traverse the membrane as a helical segment. The Extracellular segment spans residues 70–89 (KITVDLGVAPWKLRIFHCQV). A helical transmembrane segment spans residues 90–110 (TACLIYINMYLSIIFLAFVSI). The Cytoplasmic segment spans residues 111–132 (DRCLQLTYSCKIYRIQEPGFAK). Residues 133 to 153 (MISAVVWLMVLLIMVPNMIIP) traverse the membrane as a helical segment. Over 154-181 (IKDIKEKPNVGCMEFKSEFGRNWHLLTN) the chain is Extracellular. Residues 182-202 (FISIAIFFNFSAIILISNCLV) form a helical membrane-spanning segment. Over 203–224 (IRQLYRNKDNENYPNVKRALIS) the chain is Cytoplasmic. Residues 225 to 245 (ILLVTTGYIICFVPYHIVRIP) traverse the membrane as a helical segment. Topologically, residues 246–268 (YTLSQTEVISDCSTRISLFKAKE) are extracellular. Residues 269–289 (ATLLLAVSNLCFDPILYYHLS) form a helical membrane-spanning segment. Topologically, residues 290 to 319 (KAFRLKITETFASHKESKAQKEKPRSENNA) are cytoplasmic.

The protein belongs to the G-protein coupled receptor 1 family.

The protein localises to the cell membrane. G-protein coupled receptor for Big LEN, a 16-amino acid neuropeptide produced from the precursor protein, proSAAS (encoded by PCSK1N). Acts through a G(i)-alpha-mediated pathway in response to bigLEN. Big LEN-GPR171 system plays an important role in regulating feeding and metabolism. Also plays a role in modulating fear and anxiety-like behaviors in the basolateral amygdala. Big LEN-GPR171 modulates the mu-type opioid receptor signaling and antinociception. Acts as a negative regulator T cell function. This chain is G-protein coupled receptor 171 (GPR171), found in Bos taurus (Bovine).